The sequence spans 236 residues: Phosphoribosylaminoimidazole-succinocarboxamide synthase (236 aa).

This sequence belongs to the SAICAR synthetase family.

The enzyme catalyses 5-amino-1-(5-phospho-D-ribosyl)imidazole-4-carboxylate + L-aspartate + ATP = (2S)-2-[5-amino-1-(5-phospho-beta-D-ribosyl)imidazole-4-carboxamido]succinate + ADP + phosphate + 2 H(+). Its pathway is purine metabolism; IMP biosynthesis via de novo pathway; 5-amino-1-(5-phospho-D-ribosyl)imidazole-4-carboxamide from 5-amino-1-(5-phospho-D-ribosyl)imidazole-4-carboxylate: step 1/2. This Lactococcus lactis subsp. lactis (strain IL1403) (Streptococcus lactis) protein is Phosphoribosylaminoimidazole-succinocarboxamide synthase (purC).